The sequence spans 245 residues: Phosphoribosylaminoimidazole-succinocarboxamide synthase (245 aa).

Belongs to the SAICAR synthetase family.

It catalyses the reaction 5-amino-1-(5-phospho-D-ribosyl)imidazole-4-carboxylate + L-aspartate + ATP = (2S)-2-[5-amino-1-(5-phospho-beta-D-ribosyl)imidazole-4-carboxamido]succinate + ADP + phosphate + 2 H(+). The protein operates within purine metabolism; IMP biosynthesis via de novo pathway; 5-amino-1-(5-phospho-D-ribosyl)imidazole-4-carboxamide from 5-amino-1-(5-phospho-D-ribosyl)imidazole-4-carboxylate: step 1/2. The chain is Phosphoribosylaminoimidazole-succinocarboxamide synthase from Trichormus variabilis (strain ATCC 29413 / PCC 7937) (Anabaena variabilis).